Consider the following 352-residue polypeptide: uncharacterized protein (352 aa).

8 consecutive transmembrane segments (helical) span residues 6-26 (FIFL…IINP), 30-50 (FHIV…IINI), 76-96 (IFLT…FVII), 151-171 (EFII…LPFL), 197-217 (FILV…LPLI), 226-246 (VKVD…IEGL), 291-311 (WLPI…ASFA), and 330-350 (LIGG…AKIF).

It belongs to the CitM (TC 2.A.11) transporter family.

The protein localises to the cell membrane. This is an uncharacterized protein from Methanocaldococcus jannaschii (strain ATCC 43067 / DSM 2661 / JAL-1 / JCM 10045 / NBRC 100440) (Methanococcus jannaschii).